The primary structure comprises 757 residues: Endonuclease MutS2 (757 aa).

321-328 (GPNMGGKT) is an ATP binding site. A Smr domain is found at 681-756 (IDIRGMTVEE…GTGVTVVEVE (76 aa)).

Belongs to the DNA mismatch repair MutS family. MutS2 subfamily. As to quaternary structure, homodimer. Binds to stalled ribosomes, contacting rRNA.

Its function is as follows. Endonuclease that is involved in the suppression of homologous recombination and thus may have a key role in the control of bacterial genetic diversity. In terms of biological role, acts as a ribosome collision sensor, splitting the ribosome into its 2 subunits. Detects stalled/collided 70S ribosomes which it binds and splits by an ATP-hydrolysis driven conformational change. Acts upstream of the ribosome quality control system (RQC), a ribosome-associated complex that mediates the extraction of incompletely synthesized nascent chains from stalled ribosomes and their subsequent degradation. Probably generates substrates for RQC. The protein is Endonuclease MutS2 of Thermotoga neapolitana (strain ATCC 49049 / DSM 4359 / NBRC 107923 / NS-E).